The primary structure comprises 202 residues: ATP-dependent Clp protease proteolytic subunit (202 aa).

The Nucleophile role is filled by serine 106. The active site involves histidine 131.

It belongs to the peptidase S14 family. As to quaternary structure, fourteen ClpP subunits assemble into 2 heptameric rings which stack back to back to give a disk-like structure with a central cavity, resembling the structure of eukaryotic proteasomes.

The protein resides in the cytoplasm. It catalyses the reaction Hydrolysis of proteins to small peptides in the presence of ATP and magnesium. alpha-casein is the usual test substrate. In the absence of ATP, only oligopeptides shorter than five residues are hydrolyzed (such as succinyl-Leu-Tyr-|-NHMec, and Leu-Tyr-Leu-|-Tyr-Trp, in which cleavage of the -Tyr-|-Leu- and -Tyr-|-Trp bonds also occurs).. Functionally, cleaves peptides in various proteins in a process that requires ATP hydrolysis. Has a chymotrypsin-like activity. Plays a major role in the degradation of misfolded proteins. This chain is ATP-dependent Clp protease proteolytic subunit, found in Shewanella oneidensis (strain ATCC 700550 / JCM 31522 / CIP 106686 / LMG 19005 / NCIMB 14063 / MR-1).